A 512-amino-acid polypeptide reads, in one-letter code: Maturase K (512 aa).

This sequence belongs to the intron maturase 2 family. MatK subfamily.

The protein resides in the plastid. The protein localises to the chloroplast. In terms of biological role, usually encoded in the trnK tRNA gene intron. Probably assists in splicing its own and other chloroplast group II introns. The sequence is that of Maturase K from Lilium tsingtauense (Twilight lily).